The following is a 144-amino-acid chain: Maximins 7/H6 (144 aa).

Residues 1-18 (MNFKYIVAVSFLIASAYA) form the signal peptide. Residues 19 to 43 (RSEENDEQSLSQRDILEEESLREIR) constitute a propeptide that is removed on maturation. Asparagine 70 bears the Asparagine amide mark. Positions 74-123 (TAEDHEVMKRLEAVMRDLDSLDYPEEAAERETRGFNQEEIANLFTKKEKR) are excised as a propeptide. Leucine 143 carries the leucine amide modification.

It belongs to the bombinin family. Expressed by the skin glands.

It is found in the secreted. In terms of biological role, maximin-7 shows antimicrobial activity against bacteria and against the fungus C.albicans. It has little hemolytic activity. Functionally, maximin-H6 shows antimicrobial activity against bacteria and against the fungus C.albicans. Shows strong hemolytic activity. The sequence is that of Maximins 7/H6 from Bombina maxima (Giant fire-bellied toad).